The primary structure comprises 212 residues: tRNA(Phe) 7-((3-amino-3-carboxypropyl)-4-demethylwyosine(37)-N(4))-methyltransferase 2 (212 aa).

This sequence belongs to the TYW3 family.

The enzyme catalyses 4-demethyl-7-[(3S)-3-amino-3-carboxypropyl]wyosine(37) in tRNA(Phe) + S-adenosyl-L-methionine = 7-[(3S)-3-amino-3-carboxypropyl]wyosine(37) in tRNA(Phe) + S-adenosyl-L-homocysteine + H(+). S-adenosyl-L-methionine-dependent methyltransferase that acts as a component of the wyosine derivatives biosynthesis pathway. Probably methylates N-4 position of wybutosine-86 to produce wybutosine-72. The sequence is that of tRNA(Phe) 7-((3-amino-3-carboxypropyl)-4-demethylwyosine(37)-N(4))-methyltransferase 2 from Thermococcus kodakarensis (strain ATCC BAA-918 / JCM 12380 / KOD1) (Pyrococcus kodakaraensis (strain KOD1)).